The primary structure comprises 525 residues: GMP synthase [glutamine-hydrolyzing] (525 aa).

One can recognise a Glutamine amidotransferase type-1 domain in the interval 9 to 207 (RILILDFGSQ…VRDICQCEAL (199 aa)). Cysteine 86 acts as the Nucleophile in catalysis. Residues histidine 181 and glutamate 183 contribute to the active site. A GMPS ATP-PPase domain is found at 208–400 (WTPAKIIDDA…LGLPYDMLYR (193 aa)). Residue 235 to 241 (SGGVDSS) coordinates ATP.

As to quaternary structure, homodimer.

It catalyses the reaction XMP + L-glutamine + ATP + H2O = GMP + L-glutamate + AMP + diphosphate + 2 H(+). It functions in the pathway purine metabolism; GMP biosynthesis; GMP from XMP (L-Gln route): step 1/1. Its function is as follows. Catalyzes the synthesis of GMP from XMP. The sequence is that of GMP synthase [glutamine-hydrolyzing] from Salmonella paratyphi B (strain ATCC BAA-1250 / SPB7).